A 601-amino-acid polypeptide reads, in one-letter code: Glutamine--tRNA ligase (601 aa).

Positions 76 to 86 (PEPNGYLHIGH) match the 'HIGH' region motif. Residues 77–79 (EPN) and 83–89 (HIGHAKS) contribute to the ATP site. Residues Asp109 and Tyr253 each contribute to the L-glutamine site. ATP is bound by residues Thr272, 301 to 302 (RL), and 309 to 311 (MSK). The 'KMSKS' region motif lies at 308 to 312 (VMSKR).

The protein belongs to the class-I aminoacyl-tRNA synthetase family. In terms of assembly, monomer.

It localises to the cytoplasm. The enzyme catalyses tRNA(Gln) + L-glutamine + ATP = L-glutaminyl-tRNA(Gln) + AMP + diphosphate. The chain is Glutamine--tRNA ligase from Rhodopirellula baltica (strain DSM 10527 / NCIMB 13988 / SH1).